Reading from the N-terminus, the 519-residue chain is Cyclin-dependent kinase C-1 (519 aa).

Residues 25–325 (FEKLEQIGEG…AQDALDAEYF (301 aa)) enclose the Protein kinase domain. ATP contacts are provided by residues 31–39 (IGEGTYGQV) and K54. Phosphothreonine is present on T35. Y36 is subject to Phosphotyrosine. Residue D164 is the Proton acceptor of the active site. At T198 the chain carries Phosphothreonine. Basic and acidic residues predominate over residues 336 to 348 (SLPKYESSHEFQT). The disordered stretch occupies residues 336–519 (SLPKYESSHE…RNQQQYGNWQ (184 aa)). A compositionally biased stretch (gly residues) spans 426 to 444 (GNQGGGYPNRGGQGGGGSY). Low complexity predominate over residues 445–454 (GNAPYPQQGR). 2 stretches are compositionally biased toward gly residues: residues 464–483 (GMAG…GGGS) and 490–499 (GPYGPSGPGR). Positions 505 to 519 (QQGGSRNQQQYGNWQ) are enriched in polar residues.

It belongs to the protein kinase superfamily. CMGC Ser/Thr protein kinase family. CDC2/CDKX subfamily.

It catalyses the reaction L-seryl-[protein] + ATP = O-phospho-L-seryl-[protein] + ADP + H(+). It carries out the reaction L-threonyl-[protein] + ATP = O-phospho-L-threonyl-[protein] + ADP + H(+). The enzyme catalyses [DNA-directed RNA polymerase] + ATP = phospho-[DNA-directed RNA polymerase] + ADP + H(+). The protein is Cyclin-dependent kinase C-1 (CDKC-1) of Oryza sativa subsp. japonica (Rice).